The primary structure comprises 325 residues: GMP reductase (325 aa).

The Thioimidate intermediate role is filled by cysteine 174. 203 to 226 provides a ligand contact to NADP(+); it reads LIADGGIRTHGDIAKSIRFGASMV.

Belongs to the IMPDH/GMPR family. GuaC type 2 subfamily.

It carries out the reaction IMP + NH4(+) + NADP(+) = GMP + NADPH + 2 H(+). Functionally, catalyzes the irreversible NADPH-dependent deamination of GMP to IMP. It functions in the conversion of nucleobase, nucleoside and nucleotide derivatives of G to A nucleotides, and in maintaining the intracellular balance of A and G nucleotides. This is GMP reductase from Staphylococcus aureus (strain JH9).